A 273-amino-acid polypeptide reads, in one-letter code: Sanguinarine reductase (273 aa).

Catalysis depends on Ser153, which acts as the Proton donor. Substrate is bound by residues 157–161 and Lys175; that span reads CDPDH.

The protein belongs to the NAD(P)-dependent epimerase/dehydratase family. Monomer.

The enzyme catalyses dihydrosanguinarine + NADP(+) = sanguinarine + NADPH. The catalysed reaction is dihydrosanguinarine + NAD(+) = sanguinarine + NADH. It carries out the reaction dihydrochelirubine + NAD(+) = chelirubine + NADH. It catalyses the reaction dihydrochelirubine + NADP(+) = chelirubine + NADPH. Inhibited by iodoacetamide and irreversibly by its product, dihydrosanguinarine. In terms of biological role, catalyzes the reduction of benzophenanthridines, preferentially sanguinarine, to the corresponding dihydroalkaloids. Involved in detoxifying the phytoalexins produced by plant itself. The sanguinarine produced by intact cells upon elicitation, after excretion and binding to cell wall elements, is rapidly reabsorbed and reduced to the less toxic dihydrosanguinarine. Can work with both NAD(P) or NAD as a hydrogen donor, but at low concentrations, the reaction velocity with NAD(P)H is threefold higher than with NADH. However, chelerythrine shows maximum conversion rates with NADH. The substrate preference is sanguinarine &gt; chelerythrine &gt; chelirubine, macarpine or 10-OH-chelerythrine. No activity with berberine or phenanthridine cations. The protein is Sanguinarine reductase of Eschscholzia californica (California poppy).